Reading from the N-terminus, the 180-residue chain is ATP-dependent protease subunit HslV (180 aa).

Threonine 6 is a catalytic residue. Na(+)-binding residues include alanine 164, cysteine 167, and threonine 170.

The protein belongs to the peptidase T1B family. HslV subfamily. As to quaternary structure, a double ring-shaped homohexamer of HslV is capped on each side by a ring-shaped HslU homohexamer. The assembly of the HslU/HslV complex is dependent on binding of ATP.

Its subcellular location is the cytoplasm. It catalyses the reaction ATP-dependent cleavage of peptide bonds with broad specificity.. With respect to regulation, allosterically activated by HslU binding. Protease subunit of a proteasome-like degradation complex believed to be a general protein degrading machinery. This Borrelia recurrentis (strain A1) protein is ATP-dependent protease subunit HslV.